A 633-amino-acid polypeptide reads, in one-letter code: Keratin, type II cytoskeletal 2 epidermal (633 aa).

The head stretch occupies residues 1–189 (MSCQISCKSR…DPEIQNVKSQ (189 aa)). At Arg-18 the chain carries Asymmetric dimethylarginine. Residues Ser-21, Ser-24, and Ser-60 each carry the phosphoserine modification. A coil 1A region spans residues 190–225 (EREQIKTLNNKFASFIDKVRFLEQQNQVLQTKWELL). One can recognise an IF rod domain in the interval 190-503 (EREQIKTLNN…KLLEGEECRM (314 aa)). Residues 226-244 (QQLDVSTRTTNLEPIFQAY) are linker 1. The segment at 245-336 (IAKLKKYVDT…FLFDXELSQM (92 aa)) is coil 1B. The interval 337 to 360 (QTQISETNVTLSMDNNRSLDLDSI) is linker 12. Residues 361-499 (ISEVKAQYEE…ATYRKLLEGE (139 aa)) form a coil 2 region. A tail region spans residues 500–633 (ECRMSGDLSS…SGSSVTFSFR (134 aa)). The segment covering 518-527 (SSMSSSMTSR) has biased composition (low complexity). The segment at 518 to 633 (SSMSSSMTSR…SGSSVTFSFR (116 aa)) is disordered. The segment covering 528–613 (GGFGGYGSGG…GYGSGGGSRG (86 aa)) has biased composition (gly residues). Omega-N-methylarginine is present on residues Arg-588 and Arg-612.

The protein belongs to the intermediate filament family. As to quaternary structure, heterotetramer of two type I and two type II keratins. Associates with KRT10.

It is found in the cytoplasm. Its function is as follows. Probably contributes to terminal cornification. Associated with keratinocyte activation, proliferation and keratinization. Required for maintenance of corneocytes and keratin filaments in suprabasal keratinocytes in the epidermis of the ear, potentially via moderation of expression and localization of keratins and their partner proteins. Plays a role in the establishment of the epidermal barrier on plantar skin. This Canis lupus familiaris (Dog) protein is Keratin, type II cytoskeletal 2 epidermal (KRT2).